A 292-amino-acid chain; its full sequence is Nucleotide-binding protein SACE_2139 (292 aa).

Residue 15–22 (GLSGAGRS) coordinates ATP. 66–69 (DVRS) is a GTP binding site.

It belongs to the RapZ-like family.

In terms of biological role, displays ATPase and GTPase activities. The chain is Nucleotide-binding protein SACE_2139 from Saccharopolyspora erythraea (strain ATCC 11635 / DSM 40517 / JCM 4748 / NBRC 13426 / NCIMB 8594 / NRRL 2338).